We begin with the raw amino-acid sequence, 424 residues long: Microcin H47 secretion protein MchE (424 aa).

The Cytoplasmic portion of the chain corresponds to 1–25 (MFRQDALENRKMKWQGRAILLPGIP). A helical membrane pass occupies residues 26 to 46 (LWLIMLGSIVFITAFLMFIIV). The Periplasmic portion of the chain corresponds to 47–424 (GTYSRRVNVS…KHSATGPLND (378 aa)).

It belongs to the membrane fusion protein (MFP) (TC 8.A.1) family.

It localises to the cell inner membrane. In terms of biological role, probably involved, in conjunction with MchF, in the secretion of microcin H47. The sequence is that of Microcin H47 secretion protein MchE (mchE) from Escherichia coli.